A 159-amino-acid polypeptide reads, in one-letter code: Trafficking protein particle complex subunit 6A (159 aa).

Phosphoserine is present on serine 33.

Belongs to the TRAPP small subunits family. BET3 subfamily. Part of the multisubunit transport protein particle (TRAPP) complex. Heterodimer with TRAPPC3. The heterodimer TRAPPC3-TRAPPC6A interacts with TRAPPC2L. Interacts with TRAPPC2L.

It is found in the golgi apparatus. Its subcellular location is the cis-Golgi network. The protein resides in the endoplasmic reticulum. In terms of biological role, may play a role in vesicular transport during the biogenesis of melanosomes. The protein is Trafficking protein particle complex subunit 6A of Bos taurus (Bovine).